The primary structure comprises 415 residues: Putative O-antigen transporter (415 aa).

The Cytoplasmic segment spans residues 1 to 11; that stretch reads MNTNKLSLRRN. A helical transmembrane segment spans residues 12–32; the sequence is VIYLAVVQGSNYLLPLLTFPY. Residues 33 to 41 lie on the Periplasmic side of the membrane; that stretch reads LVRTLGPEN. A helical membrane pass occupies residues 42-62; that stretch reads FGIFGFCQATMLYMIMFVEYG. The Cytoplasmic portion of the chain corresponds to 63–83; that stretch reads FNLTATQSIAKAADSKDKVTS. The chain crosses the membrane as a helical span at residues 84-104; sequence IFWAVIFSKIVLIVITLIFLT. Over 105-117 the chain is Periplasmic; that stretch reads SMTLLVPEYNKHA. A helical transmembrane segment spans residues 118-138; sequence VIIWSFVPALVGNLIYPIWLF. Topologically, residues 139–173 are cytoplasmic; it reads QGKEKMKWLTLSSILSRLAIIPLTFIFVNTKSDIA. Residues 174-194 traverse the membrane as a helical segment; sequence IAGFIQSSANLVAGIIALAIV. At 195 to 220 the chain is on the periplasmic side; the sequence is VHEGWIGKVTLSLHNVRRSLADGFHV. Residues 221–241 form a helical membrane-spanning segment; the sequence is FISTSAISLYSTGIVIILGFI. Over 242–295 the chain is Cytoplasmic; the sequence is SGPTSVGNFNAANTIRNALQGLLNPITQAIYPRISSTLVLNRVKGVILIKKSLT. Residues 296–316 form a helical membrane-spanning segment; the sequence is CLSLIGGAFSLILLLGASILV. Over 317-328 the chain is Periplasmic; sequence KISIGPGYDNAV. The helical transmembrane segment at 329–349 threads the bilayer; that stretch reads IVLMIISPLPFLISLSNVYGI. The Cytoplasmic segment spans residues 350–362; the sequence is QVMLTHNYKKEFS. A helical transmembrane segment spans residues 363-383; that stretch reads KILIAAGLLSLLLIFPLTTLF. Topologically, residues 384–385 are periplasmic; sequence KE. Residues 386–406 traverse the membrane as a helical segment; sequence IGAAITLLATECLVTSLMLMF. Over 407–415 the chain is Cytoplasmic; the sequence is VRNNKLLVC.

It belongs to the polysaccharide synthase family.

It localises to the cell inner membrane. It functions in the pathway bacterial outer membrane biogenesis; LPS O-antigen biosynthesis. May be involved in the translocation process of the nascent O-polysaccharide molecules and/or its ligation to lipid A core units. This Escherichia coli (strain K12) protein is Putative O-antigen transporter (rfbX).